Consider the following 379-residue polypeptide: Histidinol-phosphate aminotransferase (379 aa).

K231 carries the post-translational modification N6-(pyridoxal phosphate)lysine.

Belongs to the class-II pyridoxal-phosphate-dependent aminotransferase family. Histidinol-phosphate aminotransferase subfamily. Homodimer. Pyridoxal 5'-phosphate is required as a cofactor.

It catalyses the reaction L-histidinol phosphate + 2-oxoglutarate = 3-(imidazol-4-yl)-2-oxopropyl phosphate + L-glutamate. It participates in amino-acid biosynthesis; L-histidine biosynthesis; L-histidine from 5-phospho-alpha-D-ribose 1-diphosphate: step 7/9. In Mycolicibacterium smegmatis (strain ATCC 700084 / mc(2)155) (Mycobacterium smegmatis), this protein is Histidinol-phosphate aminotransferase.